The sequence spans 847 residues: B-cell receptor CD22 (847 aa).

The first 19 residues, 1-19, serve as a signal peptide directing secretion; that stretch reads MHLLGPWLLLLVLEYLAFC. In terms of domain architecture, Ig-like V-type spans 20–138; sequence DSSKWAFEHP…MERIHLNVSE (119 aa). Over 20-687 the chain is Extracellular; the sequence is DSSKWAFEHP…YYSPETIGRR (668 aa). Residues asparagine 67, asparagine 101, and asparagine 112 are each glycosylated (N-linked (GlcNAc...) asparagine). Arginine 120 is a binding site for N-acetylneuraminate. 9 N-linked (GlcNAc...) asparagine glycosylation sites follow: asparagine 135, asparagine 164, asparagine 231, asparagine 295, asparagine 363, asparagine 428, asparagine 445, asparagine 448, and asparagine 479. Ig-like C2-type domains are found at residues 143-235, 242-324, 331-416, 419-500, 505-582, and 593-676; these read PHIQ…DTVQ, PKLE…AEVF, PEPS…LDVQ, PKKV…VALN, PRDV…QTAS, and PRRL…STLN. A disulfide bond links cysteine 161 and cysteine 219. 2 disulfides stabilise this stretch: cysteine 265–cysteine 309 and cysteine 353–cysteine 396. Cystine bridges form between cysteine 442–cysteine 484 and cysteine 529–cysteine 571. N-linked (GlcNAc...) asparagine glycans are attached at residues asparagine 574 and asparagine 634. Residues cysteine 616 and cysteine 659 are joined by a disulfide bond. The chain crosses the membrane as a helical span at residues 688-708; the sequence is VAVGLGSCLAILILAICGLKL. Over 709–847 the chain is Cytoplasmic; that stretch reads QRRWKRTQSQ…ENVDYVILKH (139 aa). Serine 725, serine 726, and serine 729 each carry phosphoserine. Short sequence motifs (ITIM motif) lie at residues 760-765 and 794-799; these read ISYTTL and VTYSVL. Tyrosine 762 is modified (phosphotyrosine). Phosphotyrosine is present on residues tyrosine 807, tyrosine 822, and tyrosine 842. 2 consecutive short sequence motifs (ITIM motif) follow at residues 820–825 and 840–845; these read IHYSEL and VDYVIL.

This sequence belongs to the immunoglobulin superfamily. SIGLEC (sialic acid binding Ig-like lectin) family. In terms of assembly, predominantly monomer of isoform CD22-beta. Also found as heterodimer of isoform CD22-beta and a shorter isoform. Interacts with PTPN6/SHP-1, LYN, SYK, PIK3R1/PIK3R2 and PLCG1 upon phosphorylation. Interacts with GRB2, INPP5D and SHC1 upon phosphorylation. May form a complex with INPP5D/SHIP, GRB2 and SHC1. Phosphorylation of Tyr-762, Tyr-807 and Tyr-822 are involved in binding to SYK, GRB2 and SYK, respectively. Phosphorylation of Tyr-842 is involved in binding to SYK, PLCG2 and PIK3R1/PIK3R2. Post-translationally, phosphorylated on tyrosine residues by LYN.

Its subcellular location is the cell membrane. Functionally, most highly expressed siglec (sialic acid-binding immunoglobulin-like lectin) on B-cells that plays a role in various aspects of B-cell biology including differentiation, antigen presentation, and trafficking to bone marrow. Binds to alpha 2,6-linked sialic acid residues of surface molecules such as CD22 itself, CD45 and IgM in a cis configuration. Can also bind to ligands on other cells as an adhesion molecule in a trans configuration. Acts as an inhibitory coreceptor on the surface of B-cells and inhibits B-cell receptor induced signaling, characterized by inhibition of the calcium mobilization and cellular activation. Mechanistically, the immunoreceptor tyrosine-based inhibitory motif domain is phosphorylated by the Src kinase LYN, which in turn leads to the recruitment of the protein tyrosine phosphatase 1/PTPN6, leading to the negative regulation of BCR signaling. If this negative signaling from is of sufficient strength, apoptosis of the B-cell can be induced. The sequence is that of B-cell receptor CD22 from Gorilla gorilla gorilla (Western lowland gorilla).